An 81-amino-acid polypeptide reads, in one-letter code: Delta-actitoxin-Aeq2d (81 aa).

The signal sequence occupies residues 1-19 (MNRLMILVFAAVILALASA). Positions 20-25 (DDVDIA) are excised as a propeptide. 3 disulfides stabilise this stretch: cysteine 31-cysteine 78, cysteine 33-cysteine 68, and cysteine 61-cysteine 79.

This sequence belongs to the sea anemone sodium channel inhibitory toxin family. Type I subfamily.

It is found in the secreted. Its subcellular location is the nematocyst. Its function is as follows. Binds specifically to voltage-gated sodium channels (Nav), thereby delaying their inactivation during signal transduction. Causes death to crabs. This Actinia equina (Beadlet anemone) protein is Delta-actitoxin-Aeq2d.